A 287-amino-acid polypeptide reads, in one-letter code: MLARFPLYLRLVRMDKPIGSLLLLWPTLNALWIASDGHPRWPLLVIFSLGTLLMRSAGCAMNDYADRDFDRHVKRTADRPLTSGKIRAWEAIAIAVGLAFVSFLLILPLNTLTKQLSVVALFVAGSYPFMKRFFAIPQAYLGIAFGFGIPMAFAAVQDTVPTIAWVMLIANIFWSVAYDTEYAMVDRDDDIKIGIRTSALTFGRFDVAAVMLCYAVTLGIYVWIGVTLGFGLAYWAGWAAAVGCALYHYTLIKDRERMPCFAAFRHNNWLGGVLFAGIAAHYLLAGS.

6 helical membrane-spanning segments follow: residues 41 to 61 (WPLL…GCAM), 89 to 109 (WEAI…ILPL), 133 to 153 (FFAI…PMAF), 158 to 178 (DTVP…SVAY), 202 to 224 (FGRF…YVWI), and 267 to 287 (NNWL…LAGS).

It belongs to the UbiA prenyltransferase family. The cofactor is Mg(2+).

It is found in the cell inner membrane. It catalyses the reaction all-trans-octaprenyl diphosphate + 4-hydroxybenzoate = 4-hydroxy-3-(all-trans-octaprenyl)benzoate + diphosphate. It functions in the pathway cofactor biosynthesis; ubiquinone biosynthesis. Its function is as follows. Catalyzes the prenylation of para-hydroxybenzoate (PHB) with an all-trans polyprenyl group. Mediates the second step in the final reaction sequence of ubiquinone-8 (UQ-8) biosynthesis, which is the condensation of the polyisoprenoid side chain with PHB, generating the first membrane-bound Q intermediate 3-octaprenyl-4-hydroxybenzoate. The protein is 4-hydroxybenzoate octaprenyltransferase of Burkholderia lata (strain ATCC 17760 / DSM 23089 / LMG 22485 / NCIMB 9086 / R18194 / 383).